We begin with the raw amino-acid sequence, 122 residues long: Large ribosomal subunit protein uL14 (122 aa).

The protein belongs to the universal ribosomal protein uL14 family. As to quaternary structure, part of the 50S ribosomal subunit. Forms a cluster with proteins L3 and L19. In the 70S ribosome, L14 and L19 interact and together make contacts with the 16S rRNA in bridges B5 and B8.

Functionally, binds to 23S rRNA. Forms part of two intersubunit bridges in the 70S ribosome. This is Large ribosomal subunit protein uL14 from Brachyspira hyodysenteriae (strain ATCC 49526 / WA1).